Consider the following 713-residue polypeptide: Phosphoribosylformylglycinamidine synthase subunit PurL (713 aa).

Residues 1 to 17 (MSLSPSDRELVTEELGR) show a composition bias toward basic and acidic residues. Residues 1 to 20 (MSLSPSDRELVTEELGREPT) form a disordered region. His-34 is a catalytic residue. Tyr-37 is a binding site for ATP. Position 85 (Glu-85) interacts with Mg(2+). Residues 86–89 (SHNH) and Arg-108 each bind substrate. Catalysis depends on His-87, which acts as the Proton acceptor. Asp-109 serves as a coordination point for Mg(2+). Gln-233 serves as a coordination point for substrate. Asp-261 contributes to the Mg(2+) binding site. Substrate is bound at residue 305–307 (ESQ). ATP contacts are provided by Asp-480 and Gly-517. Asn-518 serves as a coordination point for Mg(2+). Ser-520 provides a ligand contact to substrate.

This sequence belongs to the FGAMS family. Monomer. Part of the FGAM synthase complex composed of 1 PurL, 1 PurQ and 2 PurS subunits.

It localises to the cytoplasm. It carries out the reaction N(2)-formyl-N(1)-(5-phospho-beta-D-ribosyl)glycinamide + L-glutamine + ATP + H2O = 2-formamido-N(1)-(5-O-phospho-beta-D-ribosyl)acetamidine + L-glutamate + ADP + phosphate + H(+). It participates in purine metabolism; IMP biosynthesis via de novo pathway; 5-amino-1-(5-phospho-D-ribosyl)imidazole from N(2)-formyl-N(1)-(5-phospho-D-ribosyl)glycinamide: step 1/2. In terms of biological role, part of the phosphoribosylformylglycinamidine synthase complex involved in the purines biosynthetic pathway. Catalyzes the ATP-dependent conversion of formylglycinamide ribonucleotide (FGAR) and glutamine to yield formylglycinamidine ribonucleotide (FGAM) and glutamate. The FGAM synthase complex is composed of three subunits. PurQ produces an ammonia molecule by converting glutamine to glutamate. PurL transfers the ammonia molecule to FGAR to form FGAM in an ATP-dependent manner. PurS interacts with PurQ and PurL and is thought to assist in the transfer of the ammonia molecule from PurQ to PurL. The chain is Phosphoribosylformylglycinamidine synthase subunit PurL from Natronomonas pharaonis (strain ATCC 35678 / DSM 2160 / CIP 103997 / JCM 8858 / NBRC 14720 / NCIMB 2260 / Gabara) (Halobacterium pharaonis).